A 90-amino-acid chain; its full sequence is Small ribosomal subunit protein uS17 (90 aa).

The protein belongs to the universal ribosomal protein uS17 family. In terms of assembly, part of the 30S ribosomal subunit.

Its function is as follows. One of the primary rRNA binding proteins, it binds specifically to the 5'-end of 16S ribosomal RNA. In Burkholderia mallei (strain NCTC 10247), this protein is Small ribosomal subunit protein uS17.